Here is a 451-residue protein sequence, read N- to C-terminus: MGKYFGTDGVRGVANQELTPELAFKLGRYGGYVLAHNKGEKHPRVLVGRDTRVSGEMLESALIAGLISIGAEVMRLGIISTPGVAYLTRDMGAELGVMISASHNPVADNGIKFFGSDGFKLSDEQENEIEALLDQENPELPRPVGNDIVHYSDYFEGAQKYLSYLKSTVDVNFEGLKIALDGANGSTSSLAPFLFGDLEADTETIGCSPDGYNINEKCGSTHPEKLAEKVVETESDFGLAFDGDGDRIIAVDENGQIVDGDQIMFIIGQEMHKNQELNNDMIVSTVMSNLGFYKALEQEGIKSNKTKVGDRYVVEEMRRGNYNLGGEQSGHIVMMDYNTTGDGLLTGIQLASVIKMTGKSLSELAGQMKKYPQSLINVRVTDKYRVEENVDVKEVMTKVEVEMNGEGRILVRPSGTEPLVRVMVEAATDEDAERFAQQIADVVQDKMGLDK.

Ser102 acts as the Phosphoserine intermediate in catalysis. Mg(2+) is bound by residues Ser102, Asp242, Asp244, and Asp246. Ser102 carries the phosphoserine modification.

This sequence belongs to the phosphohexose mutase family. Requires Mg(2+) as cofactor. Activated by phosphorylation.

The enzyme catalyses alpha-D-glucosamine 1-phosphate = D-glucosamine 6-phosphate. Functionally, catalyzes the conversion of glucosamine-6-phosphate to glucosamine-1-phosphate. The sequence is that of Phosphoglucosamine mutase from Staphylococcus aureus (strain USA300).